We begin with the raw amino-acid sequence, 148 residues long: Transcription antitermination protein NusB (148 aa).

Belongs to the NusB family.

Functionally, involved in transcription antitermination. Required for transcription of ribosomal RNA (rRNA) genes. Binds specifically to the boxA antiterminator sequence of the ribosomal RNA (rrn) operons. This Saccharopolyspora erythraea (strain ATCC 11635 / DSM 40517 / JCM 4748 / NBRC 13426 / NCIMB 8594 / NRRL 2338) protein is Transcription antitermination protein NusB.